The chain runs to 506 residues: Thyroid hormone receptor alpha (506 aa).

A disordered region spans residues 1 to 32 (MEQKPSKVECGSDPEENSARSPDGKRKRKNGQ). The interval 1–52 (MEQKPSKVECGSDPEENSARSPDGKRKRKNGQCSLKTSMSGYIPSYLDKDEQ) is modulating. Positions 53, 56, 70, 73, 91, 97, 107, and 110 each coordinate Zn(2+). NR C4-type zinc fingers lie at residues 53-73 (CVVCGDKATGYHYRCITCEGC) and 91-115 (CKYDSCCVIDKITRNQCQLCRFKKC). Residues 53 to 127 (CVVCGDKATG…VGMAMDLVLD (75 aa)) constitute a DNA-binding region (nuclear receptor). An NR LBD domain is found at 163 to 407 (EEWDLIHVAT…EGQQLLGMHV (245 aa)). 3,3',5-triiodo-L-thyronine contacts are provided by Arg-228 and Ser-277. A disordered region spans residues 460–506 (GEDDSSEAGSLTSSDEDPEVCEDAAQATQPLPEAPPRADGEGGGGGS).

It belongs to the nuclear hormone receptor family. NR1 subfamily. In terms of assembly, binds DNA as a dimer; homodimer and heterodimer with RXRB. Interacts with NCOA3 and NCOA6 coactivators, leading to a strong increase of transcription of target genes. Probably interacts with SFPQ. Interacts with C1D. Interacts with AKAP13. Interacts with TP53INP2. Interacts with PER2. Interacts with PER2. Isoform alpha-2 and isoform alpha-1 interact with TACC1, but the interaction with alpha-1 is weaker. The interaction with isoform alpha-1, but not alpha-2, is decreased in the presence of thyroid hormone T3.

It localises to the nucleus. The protein localises to the cytoplasm. Nuclear hormone receptor that can act as a repressor or activator of transcription. High affinity receptor for thyroid hormones, including triiodothyronine and thyroxine. In Sus scrofa (Pig), this protein is Thyroid hormone receptor alpha (THRA).